The sequence spans 267 residues: Alpha-tubulin N-acetyltransferase (267 aa).

The 197-residue stretch at 1–197 (MDFRAGLENV…NNFVVYSEFF (197 aa)) folds into the N-acetyltransferase domain. Acetyl-CoA is bound by residues 131 to 144 (FYIH…GYGK) and 167 to 176 (SMKMIQFLHK).

It belongs to the acetyltransferase ATAT1 family.

The catalysed reaction is L-lysyl-[alpha-tubulin] + acetyl-CoA = N(6)-acetyl-L-lysyl-[alpha-tubulin] + CoA + H(+). Its function is as follows. Specifically acetylates 'Lys-40' in alpha-tubulin on the lumenal side of microtubules. Promotes microtubule destabilization and accelerates microtubule dynamics; this activity may be independent of acetylation activity. Acetylates alpha-tubulin with a slow enzymatic rate, due to a catalytic site that is not optimized for acetyl transfer. Enters the microtubule through each end and diffuses quickly throughout the lumen of microtubules. Acetylates only long/old microtubules because of its slow acetylation rate since it does not have time to act on dynamically unstable microtubules before the enzyme is released. The polypeptide is Alpha-tubulin N-acetyltransferase (Schistosoma japonicum (Blood fluke)).